Consider the following 83-residue polypeptide: Translational regulator CsrA (83 aa).

It belongs to the CsrA/RsmA family. Homodimer; the beta-strands of each monomer intercalate to form a hydrophobic core, while the alpha-helices form wings that extend away from the core.

Its subcellular location is the cytoplasm. In terms of biological role, a translational regulator that binds mRNA to regulate translation initiation and/or mRNA stability. Usually binds in the 5'-UTR at or near the Shine-Dalgarno sequence preventing ribosome-binding, thus repressing translation. Its main target seems to be the major flagellin gene, while its function is anatagonized by FliW. The sequence is that of Translational regulator CsrA from Thermotoga petrophila (strain ATCC BAA-488 / DSM 13995 / JCM 10881 / RKU-1).